We begin with the raw amino-acid sequence, 390 residues long: 4-O-beta-D-mannosyl-D-glucose phosphorylase (390 aa).

Belongs to the glycosyl hydrolase 130 family.

It carries out the reaction 4-O-beta-D-mannopyranosyl-D-glucopyranose + phosphate = alpha-D-mannose 1-phosphate + D-glucose. Converts 4-O-beta-D-mannopyranosyl-D-glucopyranose (Man-Glc) to mannose 1-phosphate (Man1P) and glucose. Involved in a mannan catabolic pathway which feeds into glycolysis. This is 4-O-beta-D-mannosyl-D-glucose phosphorylase from Bacteroides fragilis (strain ATCC 25285 / DSM 2151 / CCUG 4856 / JCM 11019 / LMG 10263 / NCTC 9343 / Onslow / VPI 2553 / EN-2).